Consider the following 470-residue polypeptide: Poly(A) polymerase catalytic subunit (470 aa).

Active-site residues include aspartate 192 and aspartate 194.

It belongs to the poxviridae poly(A) polymerase catalytic subunit family. In terms of assembly, heterodimer of a large (catalytic) subunit and a small (regulatory) subunit.

The enzyme catalyses RNA(n) + ATP = RNA(n)-3'-adenine ribonucleotide + diphosphate. Polymerase that creates the 3'-poly(A) tail of mRNA's. In Molluscum contagiosum virus subtype 1 (MOCV), this protein is Poly(A) polymerase catalytic subunit (PAPL).